A 571-amino-acid chain; its full sequence is 2-succinyl-5-enolpyruvyl-6-hydroxy-3-cyclohexene-1-carboxylate synthase (571 aa).

This sequence belongs to the TPP enzyme family. MenD subfamily. As to quaternary structure, homodimer. Requires Mg(2+) as cofactor. It depends on Mn(2+) as a cofactor. Thiamine diphosphate is required as a cofactor.

The enzyme catalyses isochorismate + 2-oxoglutarate + H(+) = 5-enolpyruvoyl-6-hydroxy-2-succinyl-cyclohex-3-ene-1-carboxylate + CO2. It participates in quinol/quinone metabolism; 1,4-dihydroxy-2-naphthoate biosynthesis; 1,4-dihydroxy-2-naphthoate from chorismate: step 2/7. The protein operates within quinol/quinone metabolism; menaquinone biosynthesis. Its function is as follows. Catalyzes the thiamine diphosphate-dependent decarboxylation of 2-oxoglutarate and the subsequent addition of the resulting succinic semialdehyde-thiamine pyrophosphate anion to isochorismate to yield 2-succinyl-5-enolpyruvyl-6-hydroxy-3-cyclohexene-1-carboxylate (SEPHCHC). This Vibrio parahaemolyticus serotype O3:K6 (strain RIMD 2210633) protein is 2-succinyl-5-enolpyruvyl-6-hydroxy-3-cyclohexene-1-carboxylate synthase.